The following is a 72-amino-acid chain: Translation initiation factor IF-1 (72 aa).

In terms of domain architecture, S1-like spans 1 to 72; sequence MAKDGVIEVE…NRGRITYRYK (72 aa).

The protein belongs to the IF-1 family. In terms of assembly, component of the 30S ribosomal translation pre-initiation complex which assembles on the 30S ribosome in the order IF-2 and IF-3, IF-1 and N-formylmethionyl-tRNA(fMet); mRNA recruitment can occur at any time during PIC assembly.

The protein localises to the cytoplasm. Functionally, one of the essential components for the initiation of protein synthesis. Stabilizes the binding of IF-2 and IF-3 on the 30S subunit to which N-formylmethionyl-tRNA(fMet) subsequently binds. Helps modulate mRNA selection, yielding the 30S pre-initiation complex (PIC). Upon addition of the 50S ribosomal subunit IF-1, IF-2 and IF-3 are released leaving the mature 70S translation initiation complex. This Bifidobacterium adolescentis (strain ATCC 15703 / DSM 20083 / NCTC 11814 / E194a) protein is Translation initiation factor IF-1.